The chain runs to 848 residues: Coiled-coil domain-containing protein 110 (848 aa).

A disordered region spans residues 41–62 (SEGVKESGGNEPEYGCASEPEN). The stretch at 442-794 (LQNYLKESLQ…LSDKVSSQNN (353 aa)) forms a coiled coil. Ser-620 carries the phosphoserine modification.

The protein resides in the nucleus. The protein is Coiled-coil domain-containing protein 110 (Ccdc110) of Mus musculus (Mouse).